Here is a 486-residue protein sequence, read N- to C-terminus: Pentatricopeptide repeat-containing protein At2g01860 (486 aa).

A disordered region spans residues Gln111–Thr137. PPR repeat units follow at residues Asp290–Arg321, Ser327–Pro361, Ser362–Leu396, Asp397–Pro431, and Thr432–Leu466.

The protein belongs to the PPR family. P subfamily.

This chain is Pentatricopeptide repeat-containing protein At2g01860 (EMB975), found in Arabidopsis thaliana (Mouse-ear cress).